The primary structure comprises 115 residues: DNA-directed RNA polymerase subunit omega (115 aa).

This sequence belongs to the RNA polymerase subunit omega family. The RNAP catalytic core consists of 2 alpha, 1 beta, 1 beta' and 1 omega subunit. When a sigma factor is associated with the core the holoenzyme is formed, which can initiate transcription.

The enzyme catalyses RNA(n) + a ribonucleoside 5'-triphosphate = RNA(n+1) + diphosphate. In terms of biological role, promotes RNA polymerase assembly. Latches the N- and C-terminal regions of the beta' subunit thereby facilitating its interaction with the beta and alpha subunits. The sequence is that of DNA-directed RNA polymerase subunit omega from Cutibacterium acnes (strain DSM 16379 / KPA171202) (Propionibacterium acnes).